The primary structure comprises 363 residues: Type-2 angiotensin II receptor (363 aa).

The Extracellular segment spans residues 1–45; that stretch reads MKDNFSFAATSRNITSSLPFDNLNATGTNESAFNCSHKPADKHLE. N-linked (GlcNAc...) asparagine glycosylation is found at asparagine 4, asparagine 13, asparagine 24, asparagine 29, and asparagine 34. 2 cysteine pairs are disulfide-bonded: cysteine 35–cysteine 290 and cysteine 117–cysteine 195. The helical transmembrane segment at 46 to 70 threads the bilayer; it reads AIPVLYYMIFVIGFAVNIVVVSLFC. Residues 71–80 lie on the Cytoplasmic side of the membrane; the sequence is CQKGPKKVSS. The helical transmembrane segment at 81–104 threads the bilayer; the sequence is IYIFNLAVADLLLLATLPLWATYY. Angiotensin II is bound by residues tyrosine 103 and tyrosine 104. Topologically, residues 105 to 114 are extracellular; it reads SYRYDWLFGP. A helical transmembrane segment spans residues 115 to 140; sequence VMCKVFGSFLTLNMFASIFFITCMSV. At 141–159 the chain is on the cytoplasmic side; that stretch reads DRYQSVIYPFLSQRRNPWQ. A helical transmembrane segment spans residues 160 to 181; it reads ASYVVPLVWCMACLSSLPTFYF. Angiotensin II contacts are provided by arginine 182, tyrosine 204, and lysine 215. Residues 182 to 206 lie on the Extracellular side of the membrane; it reads RDVRTIEYLGVNACIMAFPPEKYAQ. Residues 207–232 traverse the membrane as a helical segment; it reads WSAGIALMKNILGFIIPLIFIATCYF. The Cytoplasmic portion of the chain corresponds to 233–257; the sequence is GIRKHLLKTNSYGKNRITRDQVLKM. Residues 258–281 traverse the membrane as a helical segment; the sequence is AAAVVLAFIICWLPFHVLTFLDAL. Aspartate 279 contributes to the angiotensin II binding site. Topologically, residues 282–294 are extracellular; that stretch reads TWMGIINSCEVIA. Residues 295 to 320 form a helical membrane-spanning segment; that stretch reads VIDLALPFAILLGFTNSCVNPFLYCF. Aspartate 297 serves as a coordination point for angiotensin II. Residues 321 to 363 are Cytoplasmic-facing; the sequence is VGNRFQQKLRSVFRVPITWLQGKRETMSCRKSSSLREMDTFVS. The tract at residues 324 to 333 is helix VIII; sequence RFQQKLRSVF. Serine 354 is subject to Phosphoserine; by PKC.

This sequence belongs to the G-protein coupled receptor 1 family. In terms of assembly, interacts with MTUS1. In terms of tissue distribution, abundant expression in fetal tissues, immature brain, skin wound and atretic ovarian follicles.

It is found in the cell membrane. Receptor for angiotensin II, a vasoconstricting peptide. Signals primarily via a non-canonical G-protein- and beta-arrestin independent pathways. Cooperates with MTUS1 to inhibit ERK2 activation and cell proliferation. The sequence is that of Type-2 angiotensin II receptor from Rattus norvegicus (Rat).